Here is an 85-residue protein sequence, read N- to C-terminus: Follicular dendritic cell secreted peptide (85 aa).

The N-terminal stretch at 1–17 is a signal peptide; that stretch reads MKKVLLLITAILAVAVG. Positions 75–83 are O-glycosylated at one site; sequence SAPTTPLPS.

Post-translationally, O-glycosylated with core 1 or possibly core 8 glycans. In terms of tissue distribution, abundantly expressed in tonsil, lymph node, and trachea; strong expression in prostate; lower expression in thyroid, stomach, and colon.

It localises to the secreted. In terms of biological role, can bind to the surface of B-lymphoma cells, but not T-lymphoma cells, consistent with a function as a secreted mediator acting upon B-cells. This is Follicular dendritic cell secreted peptide (FDCSP) from Homo sapiens (Human).